The chain runs to 518 residues: Crotonobetaine/carnitine--CoA ligase (518 aa).

Belongs to the ATP-dependent AMP-binding enzyme family.

The catalysed reaction is 4-(trimethylamino)butanoate + ATP + CoA = 4-(trimethylamino)butanoyl-CoA + AMP + diphosphate. It catalyses the reaction crotonobetaine + ATP + CoA = crotonobetainyl-CoA + AMP + diphosphate. The enzyme catalyses (R)-carnitine + ATP + CoA = (R)-carnitinyl-CoA + AMP + diphosphate. It functions in the pathway amine and polyamine metabolism; carnitine metabolism. Functionally, catalyzes the transfer of CoA to carnitine, generating the initial carnitinyl-CoA needed for the CaiB reaction cycle. Also has activity toward crotonobetaine and gamma-butyrobetaine. This chain is Crotonobetaine/carnitine--CoA ligase, found in Proteus mirabilis (strain HI4320).